A 257-amino-acid chain; its full sequence is Phosphate import ATP-binding protein PstB (257 aa).

The region spanning 5–246 (LEIKDLTAFY…EVIFTSPKNE (242 aa)) is the ABC transporter domain. 37–44 (GPSGCGKS) is a binding site for ATP.

It belongs to the ABC transporter superfamily. Phosphate importer (TC 3.A.1.7) family. In terms of assembly, the complex is composed of two ATP-binding proteins (PstB), two transmembrane proteins (PstC and PstA) and a solute-binding protein (PstS).

The protein localises to the cell membrane. It carries out the reaction phosphate(out) + ATP + H2O = ADP + 2 phosphate(in) + H(+). Part of the ABC transporter complex PstSACB involved in phosphate import. Responsible for energy coupling to the transport system. The sequence is that of Phosphate import ATP-binding protein PstB from Tropheryma whipplei (strain Twist) (Whipple's bacillus).